The primary structure comprises 479 residues: Shugoshin (479 aa).

Positions Ser36–Leu76 form a coiled coil. Disordered regions lie at residues Ser109–Asp145, Glu220–Thr247, and Ala263–Pro479. Basic and acidic residues predominate over residues Gln123–Val132. Over residues Glu270–Phe286 the composition is skewed to acidic residues. 2 stretches are compositionally biased toward polar residues: residues Arg290–His303 and Gln318–His328. 2 stretches are compositionally biased toward basic and acidic residues: residues Pro335–Glu352 and Gly379–Leu388. Residues Lys400–Thr411 show a composition bias toward polar residues.

The protein belongs to the shugoshin family.

The protein localises to the nucleus. It localises to the chromosome. Its subcellular location is the centromere. In terms of biological role, plays a central role in chromosome cohesion during cell division by preventing premature dissociation of cohesin complex from centromeres after prophase, when most of cohesin complex dissociates from chromosomes arms. This is Shugoshin (sgo1) from Emericella nidulans (strain FGSC A4 / ATCC 38163 / CBS 112.46 / NRRL 194 / M139) (Aspergillus nidulans).